A 343-amino-acid polypeptide reads, in one-letter code: Calcium/calmodulin-dependent protein kinase type 1B (343 aa).

A Protein kinase domain is found at 15 to 270; the sequence is YEIRERLGSG…CQQALRHLWI (256 aa). ATP-binding positions include 21 to 29 and K44; that span reads LGSGAFSEV. The active-site Proton acceptor is D136. Residues 290–311 form a calmodulin-binding region; that stretch reads KNFARTHWKRAFNATSFLRHIR. The tract at residues 319–343 is disordered; sequence GEGASEQGMARHSHSGLRAGQPPKW.

Belongs to the protein kinase superfamily. CAMK Ser/Thr protein kinase family. CaMK subfamily. Phosphorylated by CAMKK1.

The protein localises to the cytoplasm. The protein resides in the nucleus. It carries out the reaction L-seryl-[protein] + ATP = O-phospho-L-seryl-[protein] + ADP + H(+). It catalyses the reaction L-threonyl-[protein] + ATP = O-phospho-L-threonyl-[protein] + ADP + H(+). Its activity is regulated as follows. Activated by Ca(2+)/calmodulin. Functionally, calcium/calmodulin-dependent protein kinase belonging to a proposed calcium-triggered signaling cascade. In vitro phosphorylates CREB1 and SYN1/synapsin I. Phosphorylates and activates CAMK1. The protein is Calcium/calmodulin-dependent protein kinase type 1B (PNCK) of Homo sapiens (Human).